The following is a 160-amino-acid chain: MLSPKRTKFRKQHRGRMRGVASKGNTIAFGQFALQAQDCGWVTARQIEASRRAMTRYIKRGGQIWIRIFPDKPVTMRPAETRMGSGKGNPEFWVAVVKPGRILFEMGGEDITEETAKEAMRLAQYKLPVKTKFISIDKNLEVSSQENTKNSKKSQEEVKQ.

Belongs to the universal ribosomal protein uL16 family. In terms of assembly, part of the 50S ribosomal subunit.

In terms of biological role, binds 23S rRNA and is also seen to make contacts with the A and possibly P site tRNAs. The chain is Large ribosomal subunit protein uL16 from Prochlorococcus marinus (strain MIT 9301).